The primary structure comprises 288 residues: MPRTPHLLAIQSHVVFGHAGNAAAVFPMQRIGINVWPLNTVQFSNHTQYGRWTGQVLPPEQIPALVEGIAGIGELGNCDAVLSGYLGSAAQGRAILEVVGRIKQANPRALYLCDPVMGHPEKGCIVAPEVSDFLLEEAAAVADYLCPNQLELDSFCDRQPNSLADCVEMARSLLARGPRAILVKHLNYPGKAGDTFEMLLVAADQVWHLQRPLLAFPRQPVGVGDLTSGLFLSRLLLGDDLRNAFEFTSAAVHEVLLETQARGSYELELVRAQDRIAHPRVRFDAVRL.

Residues Ser-12 and 47–48 (TQ) contribute to the substrate site. ATP is bound by residues Asp-114, Glu-151, Lys-184, and 211 to 214 (RPLL). Asp-225 serves as a coordination point for substrate.

Belongs to the pyridoxine kinase family. PdxY subfamily. In terms of assembly, homodimer. The cofactor is Mg(2+).

It carries out the reaction pyridoxal + ATP = pyridoxal 5'-phosphate + ADP + H(+). It functions in the pathway cofactor metabolism; pyridoxal 5'-phosphate salvage; pyridoxal 5'-phosphate from pyridoxal: step 1/1. Its function is as follows. Pyridoxal kinase involved in the salvage pathway of pyridoxal 5'-phosphate (PLP). Catalyzes the phosphorylation of pyridoxal to PLP. The polypeptide is Pyridoxal kinase PdxY (Pseudomonas paraeruginosa (strain DSM 24068 / PA7) (Pseudomonas aeruginosa (strain PA7))).